The chain runs to 318 residues: NADH-ubiquinone oxidoreductase chain 1 (318 aa).

8 consecutive transmembrane segments (helical) span residues 2–22 (FTIN…FLTL), 70–90 (LYMA…TPLP), 98–118 (FNLG…SILW), 140–160 (ISYG…SGSF), 173–193 (WLLL…LAET), 217–237 (AGSF…MNAL), 253–273 (ELYT…FLWI), and 294–314 (LPLT…LSGI).

This sequence belongs to the complex I subunit 1 family.

It localises to the mitochondrion inner membrane. The catalysed reaction is a ubiquinone + NADH + 5 H(+)(in) = a ubiquinol + NAD(+) + 4 H(+)(out). Core subunit of the mitochondrial membrane respiratory chain NADH dehydrogenase (Complex I) that is believed to belong to the minimal assembly required for catalysis. Complex I functions in the transfer of electrons from NADH to the respiratory chain. The immediate electron acceptor for the enzyme is believed to be ubiquinone. This Sapajus apella (Brown-capped capuchin) protein is NADH-ubiquinone oxidoreductase chain 1 (MT-ND1).